The primary structure comprises 1040 residues: Multidrug resistance protein MdtB (1040 aa).

The next 12 helical transmembrane spans lie at 16–36 (FIMR…AGII), 347–367 (LMMA…NIPA), 369–389 (IIPG…MVFL), 396–416 (LTLM…IVVI), 440–460 (IGFT…PLLF), 472–492 (FAIT…TLTP), 537–557 (WLTL…WVFI), 863–883 (LGST…VLGI), 888–908 (FIHP…ALLA), 911–931 (IAGS…IGIV), 968–988 (ILMT…STGV), and 998–1018 (IGMV…TPVI).

Belongs to the resistance-nodulation-cell division (RND) (TC 2.A.6) family. MdtB subfamily. As to quaternary structure, part of a tripartite efflux system composed of MdtA, MdtB and MdtC. MdtB forms a heteromultimer with MdtC.

It localises to the cell inner membrane. Functionally, the MdtABC tripartite complex confers resistance against novobiocin and deoxycholate. In Escherichia coli O139:H28 (strain E24377A / ETEC), this protein is Multidrug resistance protein MdtB.